The following is a 100-amino-acid chain: Large ribosomal subunit protein uL23 (100 aa).

Belongs to the universal ribosomal protein uL23 family. As to quaternary structure, part of the 50S ribosomal subunit. Contacts protein L29, and trigger factor when it is bound to the ribosome.

One of the early assembly proteins it binds 23S rRNA. One of the proteins that surrounds the polypeptide exit tunnel on the outside of the ribosome. Forms the main docking site for trigger factor binding to the ribosome. The sequence is that of Large ribosomal subunit protein uL23 from Escherichia coli O157:H7.